A 133-amino-acid polypeptide reads, in one-letter code: DNA-directed RNA polymerase subunit omega (133 aa).

This sequence belongs to the RNA polymerase subunit omega family. As to quaternary structure, the RNAP catalytic core consists of 2 alpha, 1 beta, 1 beta' and 1 omega subunit. When a sigma factor is associated with the core the holoenzyme is formed, which can initiate transcription.

The catalysed reaction is RNA(n) + a ribonucleoside 5'-triphosphate = RNA(n+1) + diphosphate. Promotes RNA polymerase assembly. Latches the N- and C-terminal regions of the beta' subunit thereby facilitating its interaction with the beta and alpha subunits. This chain is DNA-directed RNA polymerase subunit omega, found in Mesorhizobium japonicum (strain LMG 29417 / CECT 9101 / MAFF 303099) (Mesorhizobium loti (strain MAFF 303099)).